A 256-amino-acid chain; its full sequence is tRNA (guanine-N(7)-)-methyltransferase (256 aa).

Residues 1-15 (MVATGGQAQDQSHNQ) show a composition bias toward polar residues. Positions 1–22 (MVATGGQAQDQSHNQEPGVLCP) are disordered. Residues G79, 102–103 (EI), 137–138 (NA), and L157 each bind S-adenosyl-L-methionine. The active site involves D160. An S-adenosyl-L-methionine-binding site is contributed by 235–237 (SEE).

It belongs to the class I-like SAM-binding methyltransferase superfamily. TrmB family.

The protein resides in the nucleus. The catalysed reaction is guanosine(46) in tRNA + S-adenosyl-L-methionine = N(7)-methylguanosine(46) in tRNA + S-adenosyl-L-homocysteine. Its pathway is tRNA modification; N(7)-methylguanine-tRNA biosynthesis. In terms of biological role, catalyzes the formation of N(7)-methylguanine at position 46 (m7G46) in tRNA. The protein is tRNA (guanine-N(7)-)-methyltransferase of Drosophila yakuba (Fruit fly).